The primary structure comprises 400 residues: Elongation factor Tu (400 aa).

One can recognise a tr-type G domain in the interval Lys10 to Glu209. The tract at residues Gly19–Thr26 is G1. Gly19–Thr26 contributes to the GTP binding site. Thr26 is a binding site for Mg(2+). The interval Gly60–Asn64 is G2. A G3 region spans residues Asp81–Gly84. GTP-binding positions include Asp81–His85 and Asn136–Asp139. The tract at residues Asn136–Asp139 is G4. The interval Ser174–Leu176 is G5.

The protein belongs to the TRAFAC class translation factor GTPase superfamily. Classic translation factor GTPase family. EF-Tu/EF-1A subfamily. Monomer.

The protein localises to the cytoplasm. The catalysed reaction is GTP + H2O = GDP + phosphate + H(+). Its function is as follows. GTP hydrolase that promotes the GTP-dependent binding of aminoacyl-tRNA to the A-site of ribosomes during protein biosynthesis. The polypeptide is Elongation factor Tu (Ruminiclostridium cellulolyticum (strain ATCC 35319 / DSM 5812 / JCM 6584 / H10) (Clostridium cellulolyticum)).